Consider the following 107-residue polypeptide: Putidaredoxin (107 aa).

Positions 2–106 constitute a 2Fe-2S ferredoxin-type domain; the sequence is SKVVYVSHDG…GIVVDVPDRQ (105 aa). Residues Cys40, Cys46, Cys49, and Cys87 each contribute to the [2Fe-2S] cluster site.

The protein belongs to the adrenodoxin/putidaredoxin family. As to quaternary structure, monomer. [2Fe-2S] cluster serves as cofactor.

The oxidation of camphor by cytochrome P450-CAM requires the participation of a flavoprotein, putidaredoxin reductase, and an iron-sulfur protein, putidaredoxin, to mediate the transfer of electrons from NADH to P450 for oxygen activation. The chain is Putidaredoxin (camB) from Pseudomonas putida (Arthrobacter siderocapsulatus).